Here is a 940-residue protein sequence, read N- to C-terminus: UvrABC system protein A (940 aa).

Residue 31–38 participates in ATP binding; that stretch reads GLSGSGKS. The C4-type zinc finger occupies 252–279; the sequence is CPQCGYSMQELEPRLFSFNNPAGACGTC. 2 ABC transporter domains span residues 309-586 and 606-936; these read WDQK…PNSL and RDPK…RFLK. 639-646 contributes to the ATP binding site; that stretch reads GVSGSGKS. Residues 739-765 form a C4-type zinc finger; the sequence is CEACQGDGVIKVEMHFLPDVYVPCDVC.

This sequence belongs to the ABC transporter superfamily. UvrA family. As to quaternary structure, forms a heterotetramer with UvrB during the search for lesions.

It localises to the cytoplasm. Its function is as follows. The UvrABC repair system catalyzes the recognition and processing of DNA lesions. UvrA is an ATPase and a DNA-binding protein. A damage recognition complex composed of 2 UvrA and 2 UvrB subunits scans DNA for abnormalities. When the presence of a lesion has been verified by UvrB, the UvrA molecules dissociate. The sequence is that of UvrABC system protein A from Vibrio parahaemolyticus serotype O3:K6 (strain RIMD 2210633).